Reading from the N-terminus, the 255-residue chain is uncharacterized protein (255 aa).

The N-terminal stretch at 1-23 is a signal peptide; sequence MKRLNKLVLGIIFLFLVISITAG. The N-palmitoyl cysteine moiety is linked to residue cysteine 24. The S-diacylglycerol cysteine moiety is linked to residue cysteine 24.

This sequence belongs to the staphylococcal tandem lipoprotein family.

The protein localises to the cell membrane. This is an uncharacterized protein from Staphylococcus aureus (strain USA300).